The sequence spans 409 residues: Argininosuccinate synthase (409 aa).

Residues 13 to 21 (AYSGGLDTS) and Ala40 contribute to the ATP site. The L-citrulline site is built by Tyr91 and Ser96. ATP is bound at residue Gly121. L-aspartate contacts are provided by Thr123, Asn127, and Asp128. Asn127 is a binding site for L-citrulline. L-citrulline is bound by residues Arg131, Ser183, Ser192, Glu268, and Tyr280.

This sequence belongs to the argininosuccinate synthase family. Type 1 subfamily. In terms of assembly, homotetramer.

The protein localises to the cytoplasm. It carries out the reaction L-citrulline + L-aspartate + ATP = 2-(N(omega)-L-arginino)succinate + AMP + diphosphate + H(+). The protein operates within amino-acid biosynthesis; L-arginine biosynthesis; L-arginine from L-ornithine and carbamoyl phosphate: step 2/3. The polypeptide is Argininosuccinate synthase (Saccharophagus degradans (strain 2-40 / ATCC 43961 / DSM 17024)).